A 379-amino-acid chain; its full sequence is DnaJ homolog subfamily B member 14 (379 aa).

The Cytoplasmic portion of the chain corresponds to 1-244 (MEGNRDEAEK…GHEREEERGD (244 aa)). The tract at residues 55–94 (STAGNSPHCRKPSGSGDQSKPNCTKDSTSGSGEGGKGYTK) is disordered. The span at 69-84 (SGDQSKPNCTKDSTSG) shows a compositional bias: polar residues. The 65-residue stretch at 108-172 (NYYEVLGVTK…EKRKQYDLTG (65 aa)) folds into the J domain. The segment at 219 to 241 (SNGRAGYSQQHQHRHSGHEREEE) is disordered. The helical transmembrane segment at 245-265 (GGFSVFIQLMPIIVLILVSLL) threads the bilayer. Residues 266-379 (SQLMVSNPPY…ERLTSLYKGG (114 aa)) lie on the Lumenal side of the membrane.

This sequence belongs to the DnaJ family. DNAJB12/DNAJB14 subfamily. In terms of assembly, interacts (via J domain) with HSPA8/Hsc70. Forms a multiprotein complex, at least composed of DNAJB12, DNAJB14, HSPA8/Hsc70 and SGTA; interaction with DNAJB14 and HSPA8/Hsc70 is direct.

The protein localises to the endoplasmic reticulum membrane. The protein resides in the nucleus membrane. Acts as a co-chaperone with HSPA8/Hsc70; required to promote protein folding and trafficking, prevent aggregation of client proteins, and promote unfolded proteins to endoplasmic reticulum-associated degradation (ERAD) pathway. Acts by determining HSPA8/Hsc70's ATPase and polypeptide-binding activities. Can also act independently of HSPA8/Hsc70: together with DNAJB12, acts as a chaperone that promotes maturation of potassium channels KCND2 and KCNH2 by stabilizing nascent channel subunits and assembling them into tetramers. While stabilization of nascent channel proteins is dependent on HSPA8/Hsc70, the process of oligomerization of channel subunits is independent of HSPA8/Hsc70. When overexpressed, forms membranous structures together with DNAJB12 and HSPA8/Hsc70 within the nucleus; the role of these structures, named DJANGOs, is still unclear. Functionally, (Microbial infection) In case of infection by polyomavirus, involved in the virus endoplasmic reticulum membrane penetration and infection. This chain is DnaJ homolog subfamily B member 14, found in Homo sapiens (Human).